A 214-amino-acid chain; its full sequence is Glycerol-3-phosphate acyltransferase (214 aa).

5 consecutive transmembrane segments (helical) span residues 4-24 (LIVAVVAYLIGSVSFAVIVSA), 52-72 (AAILTLIGDAFKGWLPVWFVV), 82-102 (ETSVAIASVAVFLGHLYPVFF), 118-138 (LAINPILGVATLLTWLIVAFF), and 159-179 (FLFGPHVIALAIVVMSSLLVW).

The protein belongs to the PlsY family. As to quaternary structure, probably interacts with PlsX.

The protein localises to the cell inner membrane. The enzyme catalyses an acyl phosphate + sn-glycerol 3-phosphate = a 1-acyl-sn-glycero-3-phosphate + phosphate. Its pathway is lipid metabolism; phospholipid metabolism. In terms of biological role, catalyzes the transfer of an acyl group from acyl-phosphate (acyl-PO(4)) to glycerol-3-phosphate (G3P) to form lysophosphatidic acid (LPA). This enzyme utilizes acyl-phosphate as fatty acyl donor, but not acyl-CoA or acyl-ACP. The protein is Glycerol-3-phosphate acyltransferase of Paraburkholderia phytofirmans (strain DSM 17436 / LMG 22146 / PsJN) (Burkholderia phytofirmans).